The following is a 144-amino-acid chain: Virulence protein STM3117 (144 aa).

The region spanning 23-143 is the VOC domain; it reads RIDHLVLTVS…DGNLIEISQY (121 aa).

Is critically involved in promoting the replication of S.typhimurium cells inside host macrophages, suggesting a role in the establishment of bacterial colonization within macrophages. May be involved in the biosynthesis and modification of the peptidoglycan layer of the cell wall. This Salmonella typhimurium (strain LT2 / SGSC1412 / ATCC 700720) protein is Virulence protein STM3117.